Here is a 208-residue protein sequence, read N- to C-terminus: Uracil phosphoribosyltransferase (208 aa).

Residues arginine 78, arginine 103, and 130–138 (DPMLATGGS) each bind 5-phospho-alpha-D-ribose 1-diphosphate. Uracil contacts are provided by residues isoleucine 193 and 198–200 (GDA). Aspartate 199 serves as a coordination point for 5-phospho-alpha-D-ribose 1-diphosphate.

It belongs to the UPRTase family. Mg(2+) serves as cofactor.

The enzyme catalyses UMP + diphosphate = 5-phospho-alpha-D-ribose 1-diphosphate + uracil. It participates in pyrimidine metabolism; UMP biosynthesis via salvage pathway; UMP from uracil: step 1/1. Its activity is regulated as follows. Allosterically activated by GTP. Functionally, catalyzes the conversion of uracil and 5-phospho-alpha-D-ribose 1-diphosphate (PRPP) to UMP and diphosphate. The chain is Uracil phosphoribosyltransferase from Haemophilus influenzae (strain PittEE).